The chain runs to 129 residues: Glutaredoxin-like protein ECU08_1380 (129 aa).

The 101-residue stretch at 26–126 (EADYGEMVRR…PLLTQNREPV (101 aa)) folds into the Glutaredoxin domain.

This sequence belongs to the glutaredoxin family.

It is found in the cytoplasm. Has a glutathione-disulfide oxidoreductase activity in the presence of NADPH and glutathione reductase. Reduces low molecular weight disulfides and proteins. This chain is Glutaredoxin-like protein ECU08_1380, found in Encephalitozoon cuniculi (strain GB-M1) (Microsporidian parasite).